A 493-amino-acid polypeptide reads, in one-letter code: Glutamyl-tRNA(Gln) amidotransferase subunit A (493 aa).

Residues Lys79 and Ser159 each act as charge relay system in the active site. Catalysis depends on Ser183, which acts as the Acyl-ester intermediate.

Belongs to the amidase family. GatA subfamily. Heterotrimer of A, B and C subunits.

The enzyme catalyses L-glutamyl-tRNA(Gln) + L-glutamine + ATP + H2O = L-glutaminyl-tRNA(Gln) + L-glutamate + ADP + phosphate + H(+). In terms of biological role, allows the formation of correctly charged Gln-tRNA(Gln) through the transamidation of misacylated Glu-tRNA(Gln) in organisms which lack glutaminyl-tRNA synthetase. The reaction takes place in the presence of glutamine and ATP through an activated gamma-phospho-Glu-tRNA(Gln). This Rhizobium leguminosarum bv. trifolii (strain WSM2304) protein is Glutamyl-tRNA(Gln) amidotransferase subunit A.